The primary structure comprises 274 residues: Centriolar and ciliogenesis-associated protein hyls-1 (274 aa).

Disordered regions lie at residues 156-188 (RSSVDDEENIAESVSVGLSTETEQSELQKSSRP) and 255-274 (NNEDWKANHDKDWSPRPYID). The span at 171–183 (VGLSTETEQSELQ) shows a compositional bias: polar residues. The span at 257 to 274 (EDWKANHDKDWSPRPYID) shows a compositional bias: basic and acidic residues.

This sequence belongs to the HYLS1 family. As to quaternary structure, interacts with sas-4; leading to its localization into newly forming centrioles.

It is found in the cytoplasm. The protein resides in the cytoskeleton. The protein localises to the microtubule organizing center. Its subcellular location is the centrosome. It localises to the centriole. It is found in the cell projection. The protein resides in the cilium. Its function is as follows. Plays an important role in ciliogenesis. The polypeptide is Centriolar and ciliogenesis-associated protein hyls-1 (Caenorhabditis elegans).